The sequence spans 123 residues: Large ribosomal subunit protein uL29 (123 aa).

Belongs to the universal ribosomal protein uL29 family. As to quaternary structure, component of the large ribosomal subunit.

It localises to the cytoplasm. Component of the large ribosomal subunit. The ribosome is a large ribonucleoprotein complex responsible for the synthesis of proteins in the cell. The chain is Large ribosomal subunit protein uL29 (rpl35) from Platichthys flesus (European flounder).